The primary structure comprises 108 residues: UPF0060 membrane protein Sca_1835 (108 aa).

4 consecutive transmembrane segments (helical) span residues 5-25, 34-54, 60-80, and 84-104; these read ILIF…IWLW, FGLL…FQVF, VYAA…YVFD, and PDKY…IMLL.

It belongs to the UPF0060 family.

It localises to the cell membrane. The protein is UPF0060 membrane protein Sca_1835 of Staphylococcus carnosus (strain TM300).